A 122-amino-acid chain; its full sequence is Large ribosomal subunit protein uL14 (122 aa).

This sequence belongs to the universal ribosomal protein uL14 family. As to quaternary structure, part of the 50S ribosomal subunit. Forms a cluster with proteins L3 and L19. In the 70S ribosome, L14 and L19 interact and together make contacts with the 16S rRNA in bridges B5 and B8.

Binds to 23S rRNA. Forms part of two intersubunit bridges in the 70S ribosome. This chain is Large ribosomal subunit protein uL14, found in Chlamydia muridarum (strain MoPn / Nigg).